A 71-amino-acid chain; its full sequence is Small ribosomal subunit protein bS21 (71 aa).

The segment at 38–71 (YEKPTTVRKRAKAAAQKRHAKKLSRENARRVRLY) is disordered. The segment covering 43 to 59 (TVRKRAKAAAQKRHAKK) has biased composition (basic residues). A compositionally biased stretch (basic and acidic residues) spans 60 to 71 (LSRENARRVRLY).

It belongs to the bacterial ribosomal protein bS21 family.

The protein is Small ribosomal subunit protein bS21 of Aliivibrio fischeri (strain ATCC 700601 / ES114) (Vibrio fischeri).